The following is a 300-amino-acid chain: Protein THYLAKOID FORMATION 1, chloroplastic (300 aa).

Residues 1–67 constitute a chloroplast transit peptide; it reads MAATAISSLS…SNVTADVPPV (67 aa). The Chloroplast intermembrane portion of the chain corresponds to 68–196; the sequence is SETKSKFLKA…IAGRAGSKEG (129 aa). The helical transmembrane segment at 197–219 threads the bilayer; it reads FSYSRFFAVGLFRLLELASATDP. Residues 220–300 are Cytoplasmic-facing; it reads TVLDKLCASL…NPSFLVERKS (81 aa). The stretch at 239-268 forms a coiled coil; that stretch reads DLDVYRNLLSKLVQAKELLKEYVEREKKKQ.

Belongs to the THF1 family. In terms of assembly, interacts with GPA1. In terms of tissue distribution, ubiquitous. Present at higher level in hypocotyls (at protein level). Ubiquitously expressed in all organs, in roots of both light-grown and dark-grown seedlings. Highly expressed in the root apical meristems.

The protein resides in the plastid. Its subcellular location is the chloroplast outer membrane. The protein localises to the chloroplast stroma. Its function is as follows. Involved in a dynamic process of vesicle-mediated thylakoid membrane biogenesis. Required for the normal organization of vesicles into mature thylakoid stacks and ultimately for leaf development. Also involved in a sugar-signaling mechanism in roots by mediating signaling between the plasma membrane and the plastid. Probably acts downstream of the plasma membrane-delimited heterotrimeric G-protein GPA1 in a D-glucose signaling pathway. This is Protein THYLAKOID FORMATION 1, chloroplastic (THF1) from Arabidopsis thaliana (Mouse-ear cress).